The sequence spans 48 residues: uncharacterized protein (48 aa).

Positions 1-20 (MLLKNWPSRRIQRDKSKRAG) are disordered.

This is an uncharacterized protein from Bacillus subtilis (strain 168).